Consider the following 85-residue polypeptide: ATP synthase subunit c (85 aa).

Helical transmembrane passes span 1-21 (MLAW…ALVG) and 53-73 (LLFA…VALI).

Belongs to the ATPase C chain family. F-type ATPases have 2 components, F(1) - the catalytic core - and F(0) - the membrane proton channel. F(1) has five subunits: alpha(3), beta(3), gamma(1), delta(1), epsilon(1). F(0) has three main subunits: a(1), b(2) and c(10-14). The alpha and beta chains form an alternating ring which encloses part of the gamma chain. F(1) is attached to F(0) by a central stalk formed by the gamma and epsilon chains, while a peripheral stalk is formed by the delta and b chains.

It is found in the cell inner membrane. Functionally, f(1)F(0) ATP synthase produces ATP from ADP in the presence of a proton or sodium gradient. F-type ATPases consist of two structural domains, F(1) containing the extramembraneous catalytic core and F(0) containing the membrane proton channel, linked together by a central stalk and a peripheral stalk. During catalysis, ATP synthesis in the catalytic domain of F(1) is coupled via a rotary mechanism of the central stalk subunits to proton translocation. Its function is as follows. Key component of the F(0) channel; it plays a direct role in translocation across the membrane. A homomeric c-ring of between 10-14 subunits forms the central stalk rotor element with the F(1) delta and epsilon subunits. The sequence is that of ATP synthase subunit c from Dictyoglomus turgidum (strain DSM 6724 / Z-1310).